We begin with the raw amino-acid sequence, 401 residues long: Argininosuccinate synthase (401 aa).

ATP is bound at residue Ala8–Ser16. Tyr85 is a binding site for L-citrulline. Gly115 contributes to the ATP binding site. Residues Thr117, Asn121, and Asp122 each contribute to the L-aspartate site. Asn121 contributes to the L-citrulline binding site. L-citrulline-binding residues include Arg125, Ser173, Glu258, and Tyr270.

It belongs to the argininosuccinate synthase family. Type 1 subfamily. As to quaternary structure, homotetramer.

The protein resides in the cytoplasm. The catalysed reaction is L-citrulline + L-aspartate + ATP = 2-(N(omega)-L-arginino)succinate + AMP + diphosphate + H(+). Its pathway is amino-acid biosynthesis; L-arginine biosynthesis; L-arginine from L-ornithine and carbamoyl phosphate: step 2/3. In Staphylococcus aureus (strain Mu3 / ATCC 700698), this protein is Argininosuccinate synthase.